The following is a 225-amino-acid chain: Membrane protein LapB (225 aa).

This sequence to H.influenzae HI_1119.

It is found in the cell membrane. The protein is Membrane protein LapB (lapB) of Mannheimia haemolytica (Pasteurella haemolytica).